Consider the following 611-residue polypeptide: TANK-binding kinase 1-binding protein 1 (611 aa).

The tract at residues 1–280 (MESMFEDDIS…QDLASNQSEC (280 aa)) is homodimerization. Residues 48-162 (YGDIKERLGG…ALVETHLRQI (115 aa)) adopt a coiled-coil conformation. Residue S184 is modified to Phosphoserine. Positions 218-277 (TSVSVSELERRRLEEALEAAQGEARGAQLREEQLQAECERLQGELKQLQETRAQDLASNQ) form a coiled coil. The tract at residues 281-330 (DMAWVKRVGDDQVNLALAYTELTEELGRLRELSSLQGRILRTLLQEQARN) is interaction with TBK1 and IKBKE. Residues 328 to 437 (ARNAGQRHSP…PPPPPGERTL (110 aa)) form a disordered region. Over residues 346–361 (PACPSPSPPARPPPCA) the composition is skewed to pro residues. Residues 362-372 (PCQSPAAQRRS) show a composition bias toward low complexity. 6 positions are modified to phosphoserine: S365, S372, S379, S385, S400, and S415. The segment covering 389–406 (PSCPSPVPQRRSPVPPSC) has biased composition (pro residues). Over residues 416–433 (PVPPSCPAPQPRPPPPPG) the composition is skewed to pro residues. 2 positions are modified to phosphoserine: S500 and S530. The UBZ1-type zinc-finger motif lies at 579–605 (IRSCPLCQLGFPVGYPDDALIKHIDSH). 4 residues coordinate Zn(2+): C582, C585, H601, and H605.

As to quaternary structure, homodimer. May form a heterodimer with NAP1. Interacts with TKB1 and IKBKE. Weakly interacts with DDX3X.

Adapter protein which constitutively binds TBK1 and IKBKE playing a role in antiviral innate immunity. Essential for the efficient induction of IRF-dependent transcription following infection with Sendai virus. The protein is TANK-binding kinase 1-binding protein 1 of Mus musculus (Mouse).